Reading from the N-terminus, the 261-residue chain is Acetylglutamate kinase (261 aa).

Residues glycine 46–glycine 47, arginine 68, and asparagine 160 each bind substrate.

Belongs to the acetylglutamate kinase family. ArgB subfamily.

Its subcellular location is the cytoplasm. The catalysed reaction is N-acetyl-L-glutamate + ATP = N-acetyl-L-glutamyl 5-phosphate + ADP. It participates in amino-acid biosynthesis; L-arginine biosynthesis; N(2)-acetyl-L-ornithine from L-glutamate: step 2/4. Catalyzes the ATP-dependent phosphorylation of N-acetyl-L-glutamate. The sequence is that of Acetylglutamate kinase from Shewanella loihica (strain ATCC BAA-1088 / PV-4).